The sequence spans 423 residues: Sphingomyelin phosphodiesterase 2 (423 aa).

A Mg(2+)-binding site is contributed by E49. The active-site Proton acceptor is the H272. The next 2 helical transmembrane spans lie at 330-350 and 354-374; these read VIGLGLLLLALLCVLAAGGGA and AILLWTPSVGLVLWAGAFYLF. The interval 400–423 is disordered; that stretch reads QDLGPEPQPALLLGQQEGDRTKEQ.

The protein belongs to the neutral sphingomyelinase family. Mg(2+) serves as cofactor.

The protein resides in the cell membrane. The catalysed reaction is a sphingomyelin + H2O = phosphocholine + an N-acylsphing-4-enine + H(+). It carries out the reaction an N-(acyl)-sphingosylphosphocholine + H2O = an N-acyl-sphingoid base + phosphocholine + H(+). It catalyses the reaction 1-O-octadecyl-sn-glycero-3-phosphocholine + H2O = 1-O-octadecyl-sn-glycerol + phosphocholine + H(+). The enzyme catalyses 1-O-hexadecyl-sn-glycero-3-phosphocholine + H2O = 1-O-hexadecyl-sn-glycerol + phosphocholine + H(+). The catalysed reaction is 1-hexadecanoyl-sn-glycero-3-phosphocholine + H2O = 1-hexadecanoyl-sn-glycerol + phosphocholine + H(+). It carries out the reaction a sphingosylphosphocholine + H2O = a sphingoid base + phosphocholine + H(+). It functions in the pathway lipid metabolism; sphingolipid metabolism. In terms of biological role, catalyzes, at least in vitro, the hydrolysis of sphingomyelin to form ceramide and phosphocholine. Also hydrolyzes 1-O-alkyl-2-lyso-sn-glycero-3-phosphocholine (lyso-platelet-activating factor) in vivo. Also acts on 1-acyl-2-lyso-sn-glycero-3-phosphocholine (lyso-PC) and sphingosylphosphocholine. In Homo sapiens (Human), this protein is Sphingomyelin phosphodiesterase 2.